A 202-amino-acid chain; its full sequence is Ras-related protein RABD2b (202 aa).

Residues glycine 15–cysteine 23, tyrosine 33–threonine 40, aspartate 63–glutamine 67, asparagine 121–aspartate 124, and serine 151–lysine 153 contribute to the GTP site. The Effector region motif lies at tyrosine 37–phenylalanine 45. The segment at alanine 174 to serine 202 is disordered. Residues proline 192–serine 202 show a composition bias toward polar residues. S-geranylgeranyl cysteine attachment occurs at residues cysteine 199 and cysteine 200.

It belongs to the small GTPase superfamily. Rab family.

Its subcellular location is the golgi apparatus. The protein resides in the trans-Golgi network membrane. It localises to the golgi apparatus membrane. Protein transport. Regulator of membrane traffic from the Golgi apparatus towards the endoplasmic reticulum (ER). The protein is Ras-related protein RABD2b (RABD2B) of Arabidopsis thaliana (Mouse-ear cress).